The following is a 779-amino-acid chain: Endonuclease MutS2 (779 aa).

Position 328-335 (328-335 (GPNTGGKT)) interacts with ATP. Positions 704–779 (LDLRGKRYEE…GSGATIVTLG (76 aa)) constitute a Smr domain.

This sequence belongs to the DNA mismatch repair MutS family. MutS2 subfamily. As to quaternary structure, homodimer. Binds to stalled ribosomes, contacting rRNA.

Endonuclease that is involved in the suppression of homologous recombination and thus may have a key role in the control of bacterial genetic diversity. Functionally, acts as a ribosome collision sensor, splitting the ribosome into its 2 subunits. Detects stalled/collided 70S ribosomes which it binds and splits by an ATP-hydrolysis driven conformational change. Acts upstream of the ribosome quality control system (RQC), a ribosome-associated complex that mediates the extraction of incompletely synthesized nascent chains from stalled ribosomes and their subsequent degradation. Probably generates substrates for RQC. In Streptococcus pyogenes serotype M5 (strain Manfredo), this protein is Endonuclease MutS2.